A 199-amino-acid chain; its full sequence is Pyridoxal 5'-phosphate synthase subunit PdxT (199 aa).

An L-glutamine-binding site is contributed by 49 to 51; sequence GES. Catalysis depends on C81, which acts as the Nucleophile. Residues R110 and 139–140 contribute to the L-glutamine site; that span reads IR. Residues H175 and E177 each act as charge relay system in the active site.

It belongs to the glutaminase PdxT/SNO family. In terms of assembly, in the presence of PdxS, forms a dodecamer of heterodimers. Only shows activity in the heterodimer.

The enzyme catalyses aldehydo-D-ribose 5-phosphate + D-glyceraldehyde 3-phosphate + L-glutamine = pyridoxal 5'-phosphate + L-glutamate + phosphate + 3 H2O + H(+). The catalysed reaction is L-glutamine + H2O = L-glutamate + NH4(+). It functions in the pathway cofactor biosynthesis; pyridoxal 5'-phosphate biosynthesis. Its function is as follows. Catalyzes the hydrolysis of glutamine to glutamate and ammonia as part of the biosynthesis of pyridoxal 5'-phosphate. The resulting ammonia molecule is channeled to the active site of PdxS. This is Pyridoxal 5'-phosphate synthase subunit PdxT from Frankia alni (strain DSM 45986 / CECT 9034 / ACN14a).